A 466-amino-acid polypeptide reads, in one-letter code: Communesin N16 acyltransferase cnsK (466 aa).

It belongs to the fumigaclavine B O-acetyltransferase family.

It functions in the pathway alkaloid biosynthesis. In terms of biological role, communesin N16 acyltransferase; part of the gene cluster that mediates the biosynthesis of communesins, a prominent class of indole alkaloids with great potential as pharmaceuticals. Communesins are biosynthesized by the coupling of tryptamine and aurantioclavine, two building blocks derived from L-tryptophan. The L-tryptophan decarboxylase cnsB converts L-tryptophan to tryptamine, whereas the tryptophan dimethylallyltransferase cnsF converts L-tryptophan to 4-dimethylallyl tryptophan which is further transformed to aurantioclavine by the aurantioclavine synthase cnsA, probably aided by the catalase cnsD. The cytochrome P450 monooxygenase cnsC catalyzes the heterodimeric coupling between the two different indole moieties, tryptamine and aurantioclavine, to construct vicinal quaternary stereocenters and yield the heptacyclic communesin scaffold. The O-methyltransferase cnsE then methylates the communesin scaffold to produce communesin K, the simplest characterized communesin that contains the heptacyclic core. The dioxygenase cnsJ converts communesin K into communesin I. Acylation to introduce the hexadienyl group at position N16 of communesin I by the acyltransferase cnsK leads to the production of communesin B. The hexadienyl group is produced by the highly reducing polyketide synthase cnsI, before being hydrolytically removed from cnsI by the serine hydrolase cnsH, converted into hexadienyl-CoA by the CoA ligase cnsG, and then transferred to communesin I by cnsK. Surprisingly, cnsK may also be a promiscuous acyltransferase that can tolerate a range of acyl groups, including acetyl-, propionyl-, and butyryl-CoA, which lead to communesins A, G and H respectively. The roles of the alpha-ketoglutarate-dependent dioxygenases cnsM and cnsP have still to be determined. This Penicillium expansum (Blue mold rot fungus) protein is Communesin N16 acyltransferase cnsK.